Reading from the N-terminus, the 196-residue chain is CASP-like protein 1D1 (196 aa).

Residues 1–18 (MASTDKPDRESIKSEEAP) are compositionally biased toward basic and acidic residues. A disordered region spans residues 1–22 (MASTDKPDRESIKSEEAPAAHP). The Cytoplasmic segment spans residues 1–29 (MASTDKPDRESIKSEEAPAAHPRRSNYSS). The helical transmembrane segment at 30-50 (VHVALRFLLFAASVTAVVVMV) threads the bilayer. The Extracellular portion of the chain corresponds to 51-84 (TAKQTKIVPVPGLPISVPLEAKFSDSPAFLYFIS). The helical transmembrane segment at 85-105 (ALSVAGLYGILTTLAAISIVL) threads the bilayer. The Cytoplasmic portion of the chain corresponds to 106 to 112 (KPAYATR). The helical transmembrane segment at 113–133 (FLLHFALLDVLMLGIVASATG) threads the bilayer. Residues 134-167 (AAGGVAYVGLKGNSHVRWGKVCNVYDKFCQHVGS) lie on the Extracellular side of the membrane. Residues 168–188 (SIAVALFASVLLVLLTMLSVF) traverse the membrane as a helical segment. Residues 189-196 (SIYRKIPK) lie on the Cytoplasmic side of the membrane.

Belongs to the Casparian strip membrane proteins (CASP) family. Homodimer and heterodimers.

It is found in the cell membrane. This chain is CASP-like protein 1D1, found in Populus trichocarpa (Western balsam poplar).